The chain runs to 303 residues: Phosphatidylglycerol--prolipoprotein diacylglyceryl transferase (303 aa).

A run of 4 helical transmembrane segments spans residues 18-38, 58-78, 106-126, and 133-153; these read LGPF…LVGL, LLPI…VAFE, IWGG…SIIF, and EPFW…QAIG. R154 provides a ligand contact to a 1,2-diacyl-sn-glycero-3-phospho-(1'-sn-glycerol). The next 3 helical transmembrane spans lie at 193–213, 223–243, and 266–286; these read PTFL…IFLF, LPPG…RFWI, and IAQL…WRIY.

This sequence belongs to the Lgt family.

The protein localises to the cell inner membrane. The catalysed reaction is L-cysteinyl-[prolipoprotein] + a 1,2-diacyl-sn-glycero-3-phospho-(1'-sn-glycerol) = an S-1,2-diacyl-sn-glyceryl-L-cysteinyl-[prolipoprotein] + sn-glycerol 1-phosphate + H(+). The protein operates within protein modification; lipoprotein biosynthesis (diacylglyceryl transfer). Functionally, catalyzes the transfer of the diacylglyceryl group from phosphatidylglycerol to the sulfhydryl group of the N-terminal cysteine of a prolipoprotein, the first step in the formation of mature lipoproteins. The protein is Phosphatidylglycerol--prolipoprotein diacylglyceryl transferase of Prochlorococcus marinus (strain NATL1A).